Here is a 179-residue protein sequence, read N- to C-terminus: Segregation and condensation protein B (179 aa).

Belongs to the ScpB family. Homodimer. Homodimerization may be required to stabilize the binding of ScpA to the Smc head domains. Component of a cohesin-like complex composed of ScpA, ScpB and the Smc homodimer, in which ScpA and ScpB bind to the head domain of Smc. The presence of the three proteins is required for the association of the complex with DNA.

Its subcellular location is the cytoplasm. Its function is as follows. Participates in chromosomal partition during cell division. May act via the formation of a condensin-like complex containing Smc and ScpA that pull DNA away from mid-cell into both cell halves. This is Segregation and condensation protein B from Streptococcus equi subsp. zooepidemicus (strain H70).